The primary structure comprises 642 residues: Chaperone protein DnaK (642 aa).

The residue at position 198 (T198) is a Phosphothreonine; by autocatalysis. The segment at A602 to D642 is disordered.

It belongs to the heat shock protein 70 family.

Acts as a chaperone. In Dichelobacter nodosus (strain VCS1703A), this protein is Chaperone protein DnaK.